We begin with the raw amino-acid sequence, 206 residues long: Large ribosomal subunit protein bL25 (206 aa).

Positions 184 to 206 (AEEAAAEVAEPEVIKKGKEEEEE) are disordered. Residues 195–206 (EVIKKGKEEEEE) are compositionally biased toward basic and acidic residues.

Belongs to the bacterial ribosomal protein bL25 family. CTC subfamily. As to quaternary structure, part of the 50S ribosomal subunit; part of the 5S rRNA/L5/L18/L25 subcomplex. Contacts the 5S rRNA. Binds to the 5S rRNA independently of L5 and L18.

Its function is as follows. This is one of the proteins that binds to the 5S RNA in the ribosome where it forms part of the central protuberance. The chain is Large ribosomal subunit protein bL25 from Thermus thermophilus (strain ATCC BAA-163 / DSM 7039 / HB27).